The chain runs to 123 residues: Large ribosomal subunit protein bL12 (123 aa).

This sequence belongs to the bacterial ribosomal protein bL12 family. As to quaternary structure, homodimer. Part of the ribosomal stalk of the 50S ribosomal subunit. Forms a multimeric L10(L12)X complex, where L10 forms an elongated spine to which 2 to 4 L12 dimers bind in a sequential fashion. Binds GTP-bound translation factors.

Forms part of the ribosomal stalk which helps the ribosome interact with GTP-bound translation factors. Is thus essential for accurate translation. This Wigglesworthia glossinidia brevipalpis protein is Large ribosomal subunit protein bL12.